Here is an 877-residue protein sequence, read N- to C-terminus: MTLARFVLALVLGALPEVVSFDSVLNDSLHHRHRHRHSPPPGLQYPYYLPTQQRPPRTRPPPPLPRFPRPPRALPAQRPHALQAGHTPRPHPWGCPAGEPWVSVTDFGAPCLQWAEVPPFLERSPPASWAQLRGQRHNFCRSPDGAGRPWCFYGDARGKVDWGYCDCRHGSVRLRGGKNEFEGTVEVYASGVWGTVCSSHWDDSDASVICHQLQLGGKGIAKQTPFSGLGLIPIYWSNVRCQGDEENILLCEKDIWQGGVCPQKMAAAVTCSFSHGPTFPIIRLVGGSSVHEGRVELYHAGQWGTVCDDQWDDADAEVICRQLSLSGIAKAWHQAYFGEGSGPVMLDEVRCTGNELSIEQCPKSSWGEHNCGHKEDAGVSCTPLTDGVIRLAGGKGSHEGRLEVYYRGQWGTVCDDGWTELNTYVVCRQLGFKFGKQASANHFEESTGPIWLDDVSCSGKETRFLQCSRRQWGRHDCSHREDVSIACYPGGEGHRLSLGFPVRLMDGENKKEGRVEVFINGQWGTICDDGWTDKDAAVICRQLGYKGPARARTMAYFGEGKGPIHVDNVRCTGNERSLADCIKQDIGRHNCRHSEDAGVICDYFGKKASGNSNKESLSSVCGLRLLHRRQKRIIGGKNSLRGGWPWQVSLRLKSSHGDGRLLCGATLLSSCWVLTAAHCFKRYGNSTRNYAVRVGDYHTLVPEEFEEEVGVQQIVIHREYRPDSSDYDIALVRLQGPEEQCARFSSHVLPACLPLWRERPQKTASNCYITGWGDTGRAYSRTLQQAAIPLLPKRFCEERYKGXFTGRMLCAGNLHEHKRVDSCQGDSGGPLMCERPGESWVVYGVTSWGYGCGVKDSPGVYTKVSAFVPWIKSVTKL.

The signal sequence occupies residues 1 to 20 (MTLARFVLALVLGALPEVVS). N-linked (GlcNAc...) asparagine glycosylation is present at N26. A disordered region spans residues 31–90 (HRHRHRHSPPPGLQYPYYLPTQQRPPRTRPPPPLPRFPRPPRALPAQRPHALQAGHTPRP). Residues 44 to 55 (QYPYYLPTQQRP) show a composition bias toward low complexity. Over residues 58–73 (TRPPPPLPRFPRPPRA) the composition is skewed to pro residues. Residues 95–167 (CPAGEPWVSV…GKVDWGYCDC (73 aa)) form the Kringle domain. 20 cysteine pairs are disulfide-bonded: C95–C167, C111–C151, C140–C165, C197–C261, C210–C271, C241–C251, C307–C371, C320–C381, C351–C361, C414–C477, C427–C487, C457–C467, C527–C591, C540–C601, C571–C581, C621–C752, C663–C679, C767–C833, C796–C810, and C823–C852. SRCR domains lie at 172–273 (VRLR…TCSF), 282–383 (IRLV…SCTP), 389–489 (IRLA…ACYP), and 502–603 (VRLM…ICDY). A zymogen activation region region spans residues 621-632 (CGLRLLHRRQKR). One can recognise a Peptidase S1 domain in the interval 633–876 (IIGGKNSLRG…FVPWIKSVTK (244 aa)). Residue H678 is the Charge relay system of the active site. N-linked (GlcNAc...) asparagine glycosylation occurs at N685. The active-site Charge relay system is D728. Residue S827 is the Charge relay system of the active site.

This sequence belongs to the peptidase S1 family.

It localises to the secreted. Plays a role in neuronal plasticity and the proteolytic action may subserve structural reorganizations associated with learning and memory operations. The sequence is that of Neurotrypsin (PRSS12) from Pongo pygmaeus (Bornean orangutan).